A 219-amino-acid chain; its full sequence is uncharacterized protein (219 aa).

The signal sequence occupies residues 1–17 (MFKKIIILFLGIFLLSS). Cysteine 18 carries N-palmitoyl cysteine lipidation. The S-diacylglycerol cysteine moiety is linked to residue cysteine 18. The segment at 110–136 (KAESNATQSNNDMTLSKANKKVRKDDS) is disordered. Residues 112 to 126 (ESNATQSNNDMTLSK) show a composition bias toward polar residues. Positions 137-165 (YKEKKIEEELNQIKAMLRETKRDITKYTC) form a coiled coil.

The protein localises to the cell membrane. This is an uncharacterized protein from Rickettsia prowazekii (strain Madrid E).